Consider the following 378-residue polypeptide: Queuine tRNA-ribosyltransferase (378 aa).

The active-site Proton acceptor is Asp-89. Substrate contacts are provided by residues 89 to 93 (DSGGF), Asp-143, Gln-194, and Gly-221. Residues 252-258 (GVGTPAN) are RNA binding. The active-site Nucleophile is the Asp-271. Zn(2+)-binding residues include Cys-309, Cys-311, Cys-314, and His-340.

The protein belongs to the queuine tRNA-ribosyltransferase family. In terms of assembly, homodimer. Within each dimer, one monomer is responsible for RNA recognition and catalysis, while the other monomer binds to the replacement base PreQ1. Zn(2+) serves as cofactor.

It carries out the reaction 7-aminomethyl-7-carbaguanine + guanosine(34) in tRNA = 7-aminomethyl-7-carbaguanosine(34) in tRNA + guanine. Its pathway is tRNA modification; tRNA-queuosine biosynthesis. In terms of biological role, catalyzes the base-exchange of a guanine (G) residue with the queuine precursor 7-aminomethyl-7-deazaguanine (PreQ1) at position 34 (anticodon wobble position) in tRNAs with GU(N) anticodons (tRNA-Asp, -Asn, -His and -Tyr). Catalysis occurs through a double-displacement mechanism. The nucleophile active site attacks the C1' of nucleotide 34 to detach the guanine base from the RNA, forming a covalent enzyme-RNA intermediate. The proton acceptor active site deprotonates the incoming PreQ1, allowing a nucleophilic attack on the C1' of the ribose to form the product. After dissociation, two additional enzymatic reactions on the tRNA convert PreQ1 to queuine (Q), resulting in the hypermodified nucleoside queuosine (7-(((4,5-cis-dihydroxy-2-cyclopenten-1-yl)amino)methyl)-7-deazaguanosine). The protein is Queuine tRNA-ribosyltransferase of Lachnospira eligens (strain ATCC 27750 / DSM 3376 / VPI C15-48 / C15-B4) (Eubacterium eligens).